Consider the following 1056-residue polypeptide: Carbamoyl phosphate synthase large chain (1056 aa).

The interval 1–397 is carboxyphosphate synthetic domain; the sequence is MPRRTDIKKV…GFKKALRSID (397 aa). Arg127, Arg167, Gly173, Gly174, Glu206, Val208, Glu213, Gly239, Val240, His241, Gln282, and Glu294 together coordinate ATP. The ATP-grasp 1 domain maps to 131–323; that stretch reads KALMQKIGEP…IARVAAKIAI (193 aa). 3 residues coordinate Mg(2+): Gln282, Glu294, and Asn296. Residues Gln282, Glu294, and Asn296 each contribute to the Mn(2+) site. The tract at residues 398–530 is oligomerization domain; sequence TDINTHTNHN…YSTHGVTTDI (133 aa). The carbamoyl phosphate synthetic domain stretch occupies residues 531–919; the sequence is IQNDKKKVLI…YKACISADNE (389 aa). In terms of domain architecture, ATP-grasp 2 spans 661–852; that stretch reads SELLDALKIP…LAKVAAKVMI (192 aa). ATP is bound by residues Arg697, Ser736, Leu738, Glu743, Gly768, Val769, His770, Ser771, Gln811, and Glu823. The Mg(2+) site is built by Gln811, Glu823, and Asn825. The Mn(2+) site is built by Gln811, Glu823, and Asn825. One can recognise an MGS-like domain in the interval 918–1056; that stretch reads NELPIEGNVF…PISHYLSEVE (139 aa). An allosteric domain region spans residues 920 to 1056; sequence LPIEGNVFIS…PISHYLSEVE (137 aa).

Belongs to the CarB family. In terms of assembly, composed of two chains; the small (or glutamine) chain promotes the hydrolysis of glutamine to ammonia, which is used by the large (or ammonia) chain to synthesize carbamoyl phosphate. Tetramer of heterodimers (alpha,beta)4. Mg(2+) serves as cofactor. Mn(2+) is required as a cofactor.

It carries out the reaction hydrogencarbonate + L-glutamine + 2 ATP + H2O = carbamoyl phosphate + L-glutamate + 2 ADP + phosphate + 2 H(+). It catalyses the reaction hydrogencarbonate + NH4(+) + 2 ATP = carbamoyl phosphate + 2 ADP + phosphate + 2 H(+). The protein operates within amino-acid biosynthesis; L-arginine biosynthesis; carbamoyl phosphate from bicarbonate: step 1/1. Its pathway is pyrimidine metabolism; UMP biosynthesis via de novo pathway; (S)-dihydroorotate from bicarbonate: step 1/3. Functionally, large subunit of the glutamine-dependent carbamoyl phosphate synthetase (CPSase). CPSase catalyzes the formation of carbamoyl phosphate from the ammonia moiety of glutamine, carbonate, and phosphate donated by ATP, constituting the first step of 2 biosynthetic pathways, one leading to arginine and/or urea and the other to pyrimidine nucleotides. The large subunit (synthetase) binds the substrates ammonia (free or transferred from glutamine from the small subunit), hydrogencarbonate and ATP and carries out an ATP-coupled ligase reaction, activating hydrogencarbonate by forming carboxy phosphate which reacts with ammonia to form carbamoyl phosphate. This chain is Carbamoyl phosphate synthase large chain, found in Methanosphaerula palustris (strain ATCC BAA-1556 / DSM 19958 / E1-9c).